A 197-amino-acid polypeptide reads, in one-letter code: Large ribosomal subunit protein uL10 (197 aa).

The disordered stretch occupies residues 162–197; the sequence is GGASAPAAEEAPAAEEAAAEEVAAPAEAAEAATEEN. The segment covering 163 to 197 has biased composition (low complexity); it reads GASAPAAEEAPAAEEAAAEEVAAPAEAAEAATEEN.

The protein belongs to the universal ribosomal protein uL10 family. In terms of assembly, part of the ribosomal stalk of the 50S ribosomal subunit. The N-terminus interacts with L11 and the large rRNA to form the base of the stalk. The C-terminus forms an elongated spine to which L12 dimers bind in a sequential fashion forming a multimeric L10(L12)X complex.

Its function is as follows. Forms part of the ribosomal stalk, playing a central role in the interaction of the ribosome with GTP-bound translation factors. This chain is Large ribosomal subunit protein uL10, found in Paenarthrobacter aurescens (strain TC1).